Reading from the N-terminus, the 136-residue chain is Transcription antitermination protein NusB (136 aa).

Belongs to the NusB family.

Its function is as follows. Involved in transcription antitermination. Required for transcription of ribosomal RNA (rRNA) genes. Binds specifically to the boxA antiterminator sequence of the ribosomal RNA (rrn) operons. This chain is Transcription antitermination protein NusB, found in Paenarthrobacter aurescens (strain TC1).